The chain runs to 451 residues: Glycylpeptide N-tetradecanoyltransferase (451 aa).

Residues 34-37 (YKFW), 167-169 (LCV), and 175-179 (SKRLT) contribute to the tetradecanoyl-CoA site. The Proton acceptor; via carboxylate role is filled by L451.

This sequence belongs to the NMT family. Monomer.

It is found in the cytoplasm. The catalysed reaction is N-terminal glycyl-[protein] + tetradecanoyl-CoA = N-tetradecanoylglycyl-[protein] + CoA + H(+). Adds a myristoyl group to the N-terminal glycine residue of certain cellular proteins. The protein is Glycylpeptide N-tetradecanoyltransferase (NMT1) of Candida glabrata (strain ATCC 2001 / BCRC 20586 / JCM 3761 / NBRC 0622 / NRRL Y-65 / CBS 138) (Yeast).